The following is an 867-amino-acid chain: Heat shock 70 kDa protein 17 (867 aa).

The N-terminal stretch at 1 to 24 (MGKIFSWLVVLLSLISLVPVPSES) is a signal peptide. Polar residues-rich tracts occupy residues 560–575 (TIDS…ATDE) and 587–598 (DAENSTASNTTA). Disordered regions lie at residues 560–607 (TIDS…ASLG) and 829–867 (PKPK…HDEL). The segment covering 833-867 (PKIEKVTKTENTTKEEEQSKSSDEAAKEEESHDEL) has biased composition (basic and acidic residues). A Prevents secretion from ER motif is present at residues 865–867 (DEL).

The protein belongs to the heat shock protein 70 (TC 1.A.33) family. HSP110/SSE subfamily.

The protein resides in the endoplasmic reticulum lumen. In Arabidopsis thaliana (Mouse-ear cress), this protein is Heat shock 70 kDa protein 17 (HSP70-17).